A 314-amino-acid polypeptide reads, in one-letter code: BTB/POZ domain-containing adapter for CUL3-mediated RhoA degradation protein 2 (314 aa).

Residues 32–100 (KYVRLNVGGS…LRDDTIALPK (69 aa)) form the BTB domain.

The protein belongs to the BACURD family. In terms of assembly, component of the BCR(TNFAIP1) E3 ubiquitin ligase complex, at least composed of CUL3, TNFAIP1/BACURD2 and RBX1.

It localises to the cytoplasm. Its subcellular location is the nucleus. The protein resides in the endosome. Its pathway is protein modification; protein ubiquitination. Functionally, substrate-specific adapter of a BCR (BTB-CUL3-RBX1) E3 ubiquitin-protein ligase complex involved in regulation of cytoskeleton structure. The BCR(TNFAIP1) E3 ubiquitin ligase complex mediates the ubiquitination of target proteins, leading to their degradation by the proteasome. This Gallus gallus (Chicken) protein is BTB/POZ domain-containing adapter for CUL3-mediated RhoA degradation protein 2 (TNFAIP1).